A 430-amino-acid chain; its full sequence is Aspartate aminotransferase, mitochondrial (430 aa).

The transit peptide at 1-29 (MALLHSSRILSGMAAAFHPGLAAAASARA) directs the protein to the mitochondrion. Threonine 48 is subject to Phosphothreonine. Lysine 59 is subject to N6-acetyllysine. Glycine 65 serves as a coordination point for substrate. At lysine 73 the chain carries N6-acetyllysine; alternate. At lysine 73 the chain carries N6-succinyllysine; alternate. Lysine 82 bears the N6-acetyllysine mark. Lysine 90 is subject to N6-acetyllysine; alternate. Position 90 is an N6-succinyllysine; alternate (lysine 90). Position 96 is a 3'-nitrotyrosine; alternate (tyrosine 96). Tyrosine 96 carries the phosphotyrosine; alternate modification. N6-acetyllysine; alternate occurs at positions 107 and 122. N6-succinyllysine; alternate occurs at positions 107 and 122. Residue serine 143 is modified to Phosphoserine. N6-acetyllysine; alternate is present on lysine 159. N6-succinyllysine; alternate is present on lysine 159. Tryptophan 162 provides a ligand contact to substrate. Lysine 185 is subject to N6-acetyllysine; alternate. N6-succinyllysine; alternate is present on lysine 185. Asparagine 215 provides a ligand contact to substrate. Residue lysine 227 is modified to N6-succinyllysine. N6-acetyllysine is present on lysine 234. 2 positions are modified to N6-acetyllysine; alternate: lysine 279 and lysine 296. Lysine 279 carries the post-translational modification N6-(pyridoxal phosphate)lysine; alternate. Lysine 296 is modified (N6-succinyllysine; alternate). Lysine 302 bears the N6-acetyllysine mark. Residue lysine 309 is modified to N6-acetyllysine; alternate. Lysine 309 carries the N6-succinyllysine; alternate modification. Residue arginine 313 is modified to Asymmetric dimethylarginine. Position 338 is an N6-acetyllysine; alternate (lysine 338). Position 338 is an N6-succinyllysine; alternate (lysine 338). Lysine 345 carries the N6-acetyllysine modification. Lysine 363 bears the N6-acetyllysine; alternate mark. Lysine 363 is modified (N6-succinyllysine; alternate). N6-acetyllysine occurs at positions 364 and 387. Residues lysine 396 and lysine 404 each carry the N6-acetyllysine; alternate modification. An N6-succinyllysine; alternate mark is found at lysine 396 and lysine 404. Residue arginine 407 coordinates substrate.

This sequence belongs to the class-I pyridoxal-phosphate-dependent aminotransferase family. In terms of assembly, homodimer. Pyridoxal 5'-phosphate serves as cofactor. In terms of processing, acetylation of Lys-296, Lys-345 and Lys-363 is observed in liver mitochondria from fasted mice but not from fed mice. As to expression, detected in brain (at protein level).

The protein localises to the mitochondrion matrix. Its subcellular location is the cell membrane. The enzyme catalyses L-aspartate + 2-oxoglutarate = oxaloacetate + L-glutamate. The catalysed reaction is L-kynurenine + 2-oxoglutarate = kynurenate + L-glutamate + H2O. Functionally, catalyzes the irreversible transamination of the L-tryptophan metabolite L-kynurenine to form kynurenic acid (KA). As a member of the malate-aspartate shuttle, it has a key role in the intracellular NAD(H) redox balance. Is important for metabolite exchange between mitochondria and cytosol, and for amino acid metabolism. Facilitates cellular uptake of long-chain free fatty acids. In Mus musculus (Mouse), this protein is Aspartate aminotransferase, mitochondrial (Got2).